We begin with the raw amino-acid sequence, 436 residues long: RNA polymerase sigma-54 factor (436 aa).

A DNA-binding region (H-T-H motif) is located at residues 324 to 343; the sequence is TLREVADCLSLHESTVSRAI. An RPON box motif is present at residues 413-421; sequence SRRTVAKYR.

The protein belongs to the sigma-54 factor family. As to quaternary structure, interacts transiently with the RNAP core.

Functionally, sigma factors are initiation factors that promote the attachment of RNA polymerase (RNAP) to specific initiation sites and are then released. This sigma factor is responsible for the expression of the levanase operon. The open complex (sigma-54 and core RNA polymerase) serves as the receptor for receipt of the melting signal from the remotely bound activator protein LevR for the expression of the levanase operon. Associates with the RNAP core only in stationary phase cells. This chain is RNA polymerase sigma-54 factor (sigL), found in Bacillus subtilis (strain 168).